The primary structure comprises 2104 residues: 5'-3' DNA helicase ZGRF1 (2104 aa).

The span at 335-345 (SSPIHSSTVDG) shows a compositional bias: polar residues. Residues 335-359 (SSPIHSSTVDGNDTERKPKAQEDDV) form a disordered region. Position 336 is a phosphoserine (serine 336). Positions 347 to 356 (DTERKPKAQE) are enriched in basic and acidic residues. Serine 793 and serine 864 each carry phosphoserine. Zn(2+)-binding residues include cysteine 1349, histidine 1351, cysteine 1374, and cysteine 1382. Residues 1349-1391 (CHHSQPAKLVMVKKEGPNKGRLFYTCDGPKADRCKFFKWLEDV) form a GRF-type zinc finger. The tract at residues 2085–2104 (VEEKQKKKSEKEKSKDKSHS) is disordered.

As to quaternary structure, interacts with DNA repair protein RAD51; the interaction promotes RAD51 strand exchange activity. Also interacts with DNA repair proteins EXO1 and BRCA1; the interactions are increased following DNA damage induction.

The protein resides in the nucleus. It carries out the reaction ATP + H2O = ADP + phosphate + H(+). The catalysed reaction is Couples ATP hydrolysis with the unwinding of duplex DNA at the replication fork by translocating in the 5'-3' direction. This creates two antiparallel DNA single strands (ssDNA). The leading ssDNA polymer is the template for DNA polymerase III holoenzyme which synthesizes a continuous strand.. Its function is as follows. 5'-3' DNA helicase which is recruited to sites of DNA damage and promotes repair of replication-blocking DNA lesions through stimulation of homologous recombination (HR). Promotes HR by directly stimulating RAD51-mediated strand exchange activity. Not required to load RAD51 at sites of DNA damage but promotes recombinational repair after RAD51 recruitment. Also promotes HR by positively regulating EXO1-mediated DNA end resection of double-strand breaks. Required for recruitment of replication protein RPA2 to DNA damage sites. Promotes the initiation of the G2/M checkpoint but not its maintenance. Catalyzes Holliday junction branch migration and dissociation of D-loops and DNA flaps. In Homo sapiens (Human), this protein is 5'-3' DNA helicase ZGRF1 (ZGRF1).